A 275-amino-acid polypeptide reads, in one-letter code: 2-dehydro-3-deoxyphosphooctonate aldolase (275 aa).

It belongs to the KdsA family.

Its subcellular location is the cytoplasm. The enzyme catalyses D-arabinose 5-phosphate + phosphoenolpyruvate + H2O = 3-deoxy-alpha-D-manno-2-octulosonate-8-phosphate + phosphate. It functions in the pathway carbohydrate biosynthesis; 3-deoxy-D-manno-octulosonate biosynthesis; 3-deoxy-D-manno-octulosonate from D-ribulose 5-phosphate: step 2/3. The protein operates within bacterial outer membrane biogenesis; lipopolysaccharide biosynthesis. The chain is 2-dehydro-3-deoxyphosphooctonate aldolase from Francisella tularensis subsp. holarctica (strain LVS).